The sequence spans 512 residues: Cytochrome P450 26B1 (512 aa).

Position 441 (C441) interacts with heme.

This sequence belongs to the cytochrome P450 family. Requires heme as cofactor. In terms of tissue distribution, highly expressed in brain, particularly in the cerebellum and pons.

Its subcellular location is the endoplasmic reticulum membrane. It localises to the microsome membrane. It catalyses the reaction all-trans-retinoate + reduced [NADPH--hemoprotein reductase] + O2 = all-trans-4-hydroxyretinoate + oxidized [NADPH--hemoprotein reductase] + H2O + H(+). It carries out the reaction all-trans-retinoate + reduced [NADPH--hemoprotein reductase] + O2 = all-trans-18-hydroxyretinoate + oxidized [NADPH--hemoprotein reductase] + H2O + H(+). Functionally, a cytochrome P450 monooxygenase involved in the metabolism of retinoates (RAs), the active metabolites of vitamin A, and critical signaling molecules in animals. RAs exist as at least four different isomers: all-trans-RA (atRA), 9-cis-RA, 13-cis-RA, and 9,13-dicis-RA, where atRA is considered to be the biologically active isomer, although 9-cis-RA and 13-cis-RA also have activity. Catalyzes the hydroxylation of atRA primarily at C-4 and C-18, thereby contributing to the regulation of atRA homeostasis and signaling. Hydroxylation of atRA limits its biological activity and initiates a degradative process leading to its eventual elimination. Involved in the convertion of atRA to all-trans-4-oxo-RA. Can oxidize all-trans-13,14-dihydroretinoate (DRA) to metabolites which could include all-trans-4-oxo-DRA, all-trans-4-hydroxy-DRA, all-trans-5,8-epoxy-DRA, and all-trans-18-hydroxy-DRA. Shows preference for the following substrates: atRA &gt; 9-cis-RA &gt; 13-cis-RA. Plays a central role in germ cell development: acts by degrading RAs in the developing testis, preventing STRA8 expression, thereby leading to delay of meiosis. Required for the maintenance of the undifferentiated state of male germ cells during embryonic development in Sertoli cells, inducing arrest in G0 phase of the cell cycle and preventing meiotic entry. Plays a role in skeletal development, both at the level of patterning and in the ossification of bone and the establishment of some synovial joints. Essential for postnatal survival. Its function is as follows. Also has a significant activity in oxidation of tazarotenic acid and may therefore metabolize that xenobiotic in vivo. This is Cytochrome P450 26B1 (CYP26B1) from Homo sapiens (Human).